Reading from the N-terminus, the 399-residue chain is Dihydrolipoyllysine-residue succinyltransferase component of 2-oxoglutarate dehydrogenase complex (399 aa).

In terms of domain architecture, Lipoyl-binding spans 2-77 (AIDIKAPTFP…LSGELLGKLT (76 aa)). Position 43 is an N6-lipoyllysine (Lys43). Positions 104 to 141 (ILSPAARKIAEENAIAADSITGTGKGGRVTKEDAVAAA) constitute a Peripheral subunit-binding (PSBD) domain. Residues His370 and Asp374 contribute to the active site.

This sequence belongs to the 2-oxoacid dehydrogenase family. Forms a 24-polypeptide structural core with octahedral symmetry. Part of the 2-oxoglutarate dehydrogenase (OGDH) complex composed of E1 (2-oxoglutarate dehydrogenase), E2 (dihydrolipoamide succinyltransferase) and E3 (dihydrolipoamide dehydrogenase); the complex contains multiple copies of the three enzymatic components (E1, E2 and E3). (R)-lipoate serves as cofactor.

It catalyses the reaction N(6)-[(R)-dihydrolipoyl]-L-lysyl-[protein] + succinyl-CoA = N(6)-[(R)-S(8)-succinyldihydrolipoyl]-L-lysyl-[protein] + CoA. Its pathway is amino-acid degradation; L-lysine degradation via saccharopine pathway; glutaryl-CoA from L-lysine: step 6/6. Functionally, E2 component of the 2-oxoglutarate dehydrogenase (OGDH) complex which catalyzes the second step in the conversion of 2-oxoglutarate to succinyl-CoA and CO(2). This Azotobacter vinelandii protein is Dihydrolipoyllysine-residue succinyltransferase component of 2-oxoglutarate dehydrogenase complex (sucB).